Reading from the N-terminus, the 243-residue chain is Small ribosomal subunit protein uS2 (243 aa).

It belongs to the universal ribosomal protein uS2 family.

The sequence is that of Small ribosomal subunit protein uS2 from Chromobacterium violaceum (strain ATCC 12472 / DSM 30191 / JCM 1249 / CCUG 213 / NBRC 12614 / NCIMB 9131 / NCTC 9757 / MK).